The chain runs to 123 residues: Small ribosomal subunit protein uS12 (123 aa).

A disordered region spans residues 1-32 (MPTIQQLVRKGRKDKKAKVKTAALKGSPQRRG). The segment covering 9–19 (RKGRKDKKAKV) has biased composition (basic residues). The residue at position 89 (Asp-89) is a 3-methylthioaspartic acid.

This sequence belongs to the universal ribosomal protein uS12 family. Part of the 30S ribosomal subunit. Contacts proteins S8 and S17. May interact with IF1 in the 30S initiation complex.

Functionally, with S4 and S5 plays an important role in translational accuracy. Interacts with and stabilizes bases of the 16S rRNA that are involved in tRNA selection in the A site and with the mRNA backbone. Located at the interface of the 30S and 50S subunits, it traverses the body of the 30S subunit contacting proteins on the other side and probably holding the rRNA structure together. The combined cluster of proteins S8, S12 and S17 appears to hold together the shoulder and platform of the 30S subunit. The sequence is that of Small ribosomal subunit protein uS12 from Corynebacterium kroppenstedtii (strain DSM 44385 / JCM 11950 / CIP 105744 / CCUG 35717).